Here is a 282-residue protein sequence, read N- to C-terminus: Protoheme IX farnesyltransferase (282 aa).

Transmembrane regions (helical) follow at residues 9–29 (LAKP…FLLA), 39–59 (LPLF…GCVF), 79–99 (LVTG…LLIL), 102–122 (LVLY…GFIV), 139–159 (VLGG…VVNI), 165–185 (LALF…IAML), 210–230 (IMLF…VLGS), 231–251 (ADLF…YKSI), and 261–281 (VFAK…CLTM).

It belongs to the UbiA prenyltransferase family. Protoheme IX farnesyltransferase subfamily.

Its subcellular location is the cell inner membrane. It catalyses the reaction heme b + (2E,6E)-farnesyl diphosphate + H2O = Fe(II)-heme o + diphosphate. It functions in the pathway porphyrin-containing compound metabolism; heme O biosynthesis; heme O from protoheme: step 1/1. Its function is as follows. Converts heme B (protoheme IX) to heme O by substitution of the vinyl group on carbon 2 of heme B porphyrin ring with a hydroxyethyl farnesyl side group. This Francisella tularensis subsp. holarctica (strain FTNF002-00 / FTA) protein is Protoheme IX farnesyltransferase.